We begin with the raw amino-acid sequence, 431 residues long: Glutamate-1-semialdehyde 2,1-aminomutase (431 aa).

The residue at position 270 (Lys270) is an N6-(pyridoxal phosphate)lysine.

This sequence belongs to the class-III pyridoxal-phosphate-dependent aminotransferase family. HemL subfamily. As to quaternary structure, homodimer. It depends on pyridoxal 5'-phosphate as a cofactor.

It localises to the cytoplasm. It carries out the reaction (S)-4-amino-5-oxopentanoate = 5-aminolevulinate. The protein operates within porphyrin-containing compound metabolism; protoporphyrin-IX biosynthesis; 5-aminolevulinate from L-glutamyl-tRNA(Glu): step 2/2. This Limosilactobacillus reuteri subsp. reuteri (strain JCM 1112) (Lactobacillus reuteri) protein is Glutamate-1-semialdehyde 2,1-aminomutase.